A 492-amino-acid polypeptide reads, in one-letter code: Cytochrome P450 2B19 (492 aa).

Ser129 is subject to Phosphoserine; by PKA. Cys437 provides a ligand contact to heme.

Belongs to the cytochrome P450 family. Requires heme as cofactor. Expressed only in differentiated keratinocytes in skin.

Its subcellular location is the endoplasmic reticulum membrane. The protein resides in the microsome membrane. The catalysed reaction is an organic molecule + reduced [NADPH--hemoprotein reductase] + O2 = an alcohol + oxidized [NADPH--hemoprotein reductase] + H2O + H(+). In terms of biological role, cytochromes P450 are a group of heme-thiolate monooxygenases. In liver microsomes, this enzyme is involved in an NADPH-dependent electron transport pathway. It oxidizes a variety of structurally unrelated compounds, including steroids, fatty acids, and xenobiotics. The polypeptide is Cytochrome P450 2B19 (Cyp2b19) (Mus musculus (Mouse)).